An 89-amino-acid chain; its full sequence is Small ribosomal subunit protein uS15 (89 aa).

It belongs to the universal ribosomal protein uS15 family. In terms of assembly, part of the 30S ribosomal subunit. Forms a bridge to the 50S subunit in the 70S ribosome, contacting the 23S rRNA.

Functionally, one of the primary rRNA binding proteins, it binds directly to 16S rRNA where it helps nucleate assembly of the platform of the 30S subunit by binding and bridging several RNA helices of the 16S rRNA. In terms of biological role, forms an intersubunit bridge (bridge B4) with the 23S rRNA of the 50S subunit in the ribosome. The sequence is that of Small ribosomal subunit protein uS15 from Escherichia coli O139:H28 (strain E24377A / ETEC).